We begin with the raw amino-acid sequence, 209 residues long: Uracil phosphoribosyltransferase (209 aa).

Residues R79, R104, and 131 to 139 (DPMLATGVS) contribute to the 5-phospho-alpha-D-ribose 1-diphosphate site. Residues I194 and 199–201 (GDA) each bind uracil. A 5-phospho-alpha-D-ribose 1-diphosphate-binding site is contributed by D200.

This sequence belongs to the UPRTase family. Mg(2+) is required as a cofactor.

The catalysed reaction is UMP + diphosphate = 5-phospho-alpha-D-ribose 1-diphosphate + uracil. The protein operates within pyrimidine metabolism; UMP biosynthesis via salvage pathway; UMP from uracil: step 1/1. Allosterically activated by GTP. Functionally, catalyzes the conversion of uracil and 5-phospho-alpha-D-ribose 1-diphosphate (PRPP) to UMP and diphosphate. The protein is Uracil phosphoribosyltransferase of Thermotoga neapolitana (strain ATCC 49049 / DSM 4359 / NBRC 107923 / NS-E).